Reading from the N-terminus, the 231-residue chain is MKQYNDLFKIIHREGYIFIASFALVSFLLASFNEKLGCIGFIATAWCIYFFRNPDRFVPISDDLVISPADGIIQEIKEALPPPELGLGDVEMIRVSIFLNIFNVHVNRIPANGKILALHYNPGKFFNASLDKASIYNERQSVLMETDQGQKIVFVQIAGLIARRIVCDLEEGNEVKTGERYGIIRFGSRVDVYLPLKTALLVSKGQTAIGGETIIADFGRKKTAEFKFERK.

Residue serine 188 is the Schiff-base intermediate with substrate; via pyruvic acid of the active site. Serine 188 is subject to Pyruvic acid (Ser); by autocatalysis.

This sequence belongs to the phosphatidylserine decarboxylase family. PSD-A subfamily. In terms of assembly, heterodimer of a large membrane-associated beta subunit and a small pyruvoyl-containing alpha subunit. Pyruvate serves as cofactor. In terms of processing, is synthesized initially as an inactive proenzyme. Formation of the active enzyme involves a self-maturation process in which the active site pyruvoyl group is generated from an internal serine residue via an autocatalytic post-translational modification. Two non-identical subunits are generated from the proenzyme in this reaction, and the pyruvate is formed at the N-terminus of the alpha chain, which is derived from the carboxyl end of the proenzyme. The post-translation cleavage follows an unusual pathway, termed non-hydrolytic serinolysis, in which the side chain hydroxyl group of the serine supplies its oxygen atom to form the C-terminus of the beta chain, while the remainder of the serine residue undergoes an oxidative deamination to produce ammonia and the pyruvoyl prosthetic group on the alpha chain.

Its subcellular location is the cell membrane. The enzyme catalyses a 1,2-diacyl-sn-glycero-3-phospho-L-serine + H(+) = a 1,2-diacyl-sn-glycero-3-phosphoethanolamine + CO2. It participates in phospholipid metabolism; phosphatidylethanolamine biosynthesis; phosphatidylethanolamine from CDP-diacylglycerol: step 2/2. Functionally, catalyzes the formation of phosphatidylethanolamine (PtdEtn) from phosphatidylserine (PtdSer). The protein is Phosphatidylserine decarboxylase proenzyme of Rickettsia felis (strain ATCC VR-1525 / URRWXCal2) (Rickettsia azadi).